Consider the following 355-residue polypeptide: Chorismate synthase (355 aa).

NADP(+)-binding residues include arginine 44 and arginine 49. FMN is bound by residues 121–123 (HFS), glycine 277, 292–296 (KPTPS), and arginine 319.

This sequence belongs to the chorismate synthase family. FMNH2 serves as cofactor.

The enzyme catalyses 5-O-(1-carboxyvinyl)-3-phosphoshikimate = chorismate + phosphate. It functions in the pathway metabolic intermediate biosynthesis; chorismate biosynthesis; chorismate from D-erythrose 4-phosphate and phosphoenolpyruvate: step 7/7. Catalyzes the anti-1,4-elimination of the C-3 phosphate and the C-6 proR hydrogen from 5-enolpyruvylshikimate-3-phosphate (EPSP) to yield chorismate, which is the branch point compound that serves as the starting substrate for the three terminal pathways of aromatic amino acid biosynthesis. This reaction introduces a second double bond into the aromatic ring system. This chain is Chorismate synthase, found in Thermococcus kodakarensis (strain ATCC BAA-918 / JCM 12380 / KOD1) (Pyrococcus kodakaraensis (strain KOD1)).